Reading from the N-terminus, the 419-residue chain is tRNA(Ile)-lysidine synthase (419 aa).

S25–S30 lines the ATP pocket.

This sequence belongs to the tRNA(Ile)-lysidine synthase family.

It localises to the cytoplasm. It carries out the reaction cytidine(34) in tRNA(Ile2) + L-lysine + ATP = lysidine(34) in tRNA(Ile2) + AMP + diphosphate + H(+). Ligates lysine onto the cytidine present at position 34 of the AUA codon-specific tRNA(Ile) that contains the anticodon CAU, in an ATP-dependent manner. Cytidine is converted to lysidine, thus changing the amino acid specificity of the tRNA from methionine to isoleucine. The chain is tRNA(Ile)-lysidine synthase from Actinobacillus pleuropneumoniae serotype 7 (strain AP76).